A 1057-amino-acid chain; its full sequence is MPKRQDIETILVIGSGPIIIGQAAEFDYAGTQACLALKEEGYRVILVNSNPATIMTDNEIADKVYIEPLTHDFIARIIRKEQPDALLPTLGGQTGLNMAIQLHDSGELEANNVKLLGTELESIQQAEDRELFRTLMNDLGVPVPESDIVNTVEQAFAFKEEVGYPLIVRPAFTMGGTGGGICHNDAEFKEIVTNGLHYSPATQCLIEKSIAGFKEIEYEVMRDKNDNAIVVCNMENIDPVGIHTGDSIVVAPSQTLSDVEYQMLRDVSLKVIRALGIEGGCNVQLALDPHSLDYYIIEVNPRVSRSSALASKATGYPIAKLAAKIAIGLTLDEMLNPITETSYAAFEPTLDYVISKIPRFPFDKFEKGERVLGTQMKATGEVMAIGRTYEESLLKAIRSLEYGVHHLGLPNGETFDLGYIKERIQDQDDERLFFIGEAIRRGTTLEEIHEMTKIDYFFLNKFQHIIDIEHDLKSNKGDIDYLKFAKNYGFSDRVIAHRFDMTEEEVYDLRQQNGIIPVYKMVDTCAAEFESATPYYYGTYEYENESVVTEKEKILVLGSGPIRIGQGVEFDYATVHAVWAIQQAGYEAIIVNNNPETVSTDFSISDKLYFEPLTEEDVMNIIDLEQPKGVVVQFGGQTAINLADKLAKHDVKILGTSLEDLNRAEDRKEFEALLHTIDVPQPNGKTATSPQEALENARSIGYPVVVRPSYVLGGRAMEIVNSDAELEDYMNQAVKASPDHPVLVDRYLTGKEIEVDAISDGETVIIPGIMEHIERAGVHSGDSIAVYPPQTLKQEEMTTLEDFTIRLAKGLNIVGLINIQFVIAHDGVYVLEVNPRSSRTVPFLSKITNIQMAQLAMRAIIGDKLVDLGYQPGIQPYTEGVFVKAPVFSFNKLKNVDITLGPEMKSTGEVMGKDATMEKALFKGLTASGMEVKDHGTVLMTVSDKDKDEIVSIAQRLNEVGYRILATQGTARKLAENNIPSEVVGKIGGEDDLLTRIQNGEVQIVVNTMTKGKEFERDGFQIRRASVENGVPCLTSLDTVVALTRVIESMTFTMKNM.

A carboxyphosphate synthetic domain region spans residues 1–401 (MPKRQDIETI…SLLKAIRSLE (401 aa)). ATP contacts are provided by Arg129, Arg169, Gly175, Gly176, Lys208, Ile210, Glu215, Gly241, Ile242, His243, Gln284, and Glu298. In terms of domain architecture, ATP-grasp 1 spans 133–327 (RTLMNDLGVP…IAKLAAKIAI (195 aa)). Residues Gln284, Glu298, and Asn300 each contribute to the Mg(2+) site. Mn(2+)-binding residues include Gln284, Glu298, and Asn300. The tract at residues 402–546 (YGVHHLGLPN…YGTYEYENES (145 aa)) is oligomerization domain. The interval 547–929 (VVTEKEKILV…ALFKGLTASG (383 aa)) is carbamoyl phosphate synthetic domain. The region spanning 671–861 (EALLHTIDVP…MAQLAMRAII (191 aa)) is the ATP-grasp 2 domain. ATP is bound by residues Arg707, Arg746, Leu748, Glu752, Gly777, Val778, His779, Ser780, Gln820, and Glu832. Mg(2+) is bound by residues Gln820, Glu832, and Asn834. Mn(2+) is bound by residues Gln820, Glu832, and Asn834. In terms of domain architecture, MGS-like spans 930–1057 (MEVKDHGTVL…ESMTFTMKNM (128 aa)). The segment at 930–1057 (MEVKDHGTVL…ESMTFTMKNM (128 aa)) is allosteric domain.

The protein belongs to the CarB family. As to quaternary structure, composed of two chains; the small (or glutamine) chain promotes the hydrolysis of glutamine to ammonia, which is used by the large (or ammonia) chain to synthesize carbamoyl phosphate. Tetramer of heterodimers (alpha,beta)4. The cofactor is Mg(2+). Requires Mn(2+) as cofactor.

It catalyses the reaction hydrogencarbonate + L-glutamine + 2 ATP + H2O = carbamoyl phosphate + L-glutamate + 2 ADP + phosphate + 2 H(+). It carries out the reaction hydrogencarbonate + NH4(+) + 2 ATP = carbamoyl phosphate + 2 ADP + phosphate + 2 H(+). Its pathway is amino-acid biosynthesis; L-arginine biosynthesis; carbamoyl phosphate from bicarbonate: step 1/1. It participates in pyrimidine metabolism; UMP biosynthesis via de novo pathway; (S)-dihydroorotate from bicarbonate: step 1/3. Its function is as follows. Large subunit of the glutamine-dependent carbamoyl phosphate synthetase (CPSase). CPSase catalyzes the formation of carbamoyl phosphate from the ammonia moiety of glutamine, carbonate, and phosphate donated by ATP, constituting the first step of 2 biosynthetic pathways, one leading to arginine and/or urea and the other to pyrimidine nucleotides. The large subunit (synthetase) binds the substrates ammonia (free or transferred from glutamine from the small subunit), hydrogencarbonate and ATP and carries out an ATP-coupled ligase reaction, activating hydrogencarbonate by forming carboxy phosphate which reacts with ammonia to form carbamoyl phosphate. In Staphylococcus saprophyticus subsp. saprophyticus (strain ATCC 15305 / DSM 20229 / NCIMB 8711 / NCTC 7292 / S-41), this protein is Carbamoyl phosphate synthase large chain.